A 559-amino-acid polypeptide reads, in one-letter code: NXPE family member 3 (559 aa).

The first 30 residues, 1 to 30 (MWINFVKLRLFCCLLAVLMVVVLVVNVTQV), serve as a signal peptide directing secretion. Residues Asn-26, Asn-237, and Asn-346 are each glycosylated (N-linked (GlcNAc...) asparagine).

This sequence belongs to the NXPE family.

The protein localises to the secreted. The polypeptide is NXPE family member 3 (NXPE3) (Bos taurus (Bovine)).